Here is a 247-residue protein sequence, read N- to C-terminus: Proteasome subunit alpha type-7-1 (247 aa).

It belongs to the peptidase T1A family. In terms of assembly, the 26S proteasome consists of a 20S proteasome core and two 19S regulatory subunits. The 20S proteasome core is composed of 28 subunits that are arranged in four stacked rings, resulting in a barrel-shaped structure. The two end rings are each formed by seven alpha subunits, and the two central rings are each formed by seven beta subunits. The catalytic chamber with the active sites is on the inside of the barrel.

It localises to the cytoplasm. The protein localises to the nucleus. Its function is as follows. The proteasome is a multicatalytic proteinase complex which is characterized by its ability to cleave peptides with Arg, Phe, Tyr, Leu, and Glu adjacent to the leaving group at neutral or slightly basic pH. The proteasome has an ATP-dependent proteolytic activity. The chain is Proteasome subunit alpha type-7-1 (Pros28.1) from Drosophila virilis (Fruit fly).